A 239-amino-acid polypeptide reads, in one-letter code: NADH-quinone oxidoreductase subunit I 1 (239 aa).

2 consecutive 4Fe-4S ferredoxin-type domains span residues 81-111 (LVPREDGKPRCVACYMCATICPAQCIYIEAA) and 123-152 (AKFVIDELRCIVCGFCVEACPKDAIRMDSG). [4Fe-4S] cluster contacts are provided by Cys91, Cys94, Cys97, Cys101, Cys132, Cys135, Cys138, and Cys142.

It belongs to the complex I 23 kDa subunit family. As to quaternary structure, NDH-1 is composed of 14 different subunits. Subunits NuoA, H, J, K, L, M, N constitute the membrane sector of the complex. It depends on [4Fe-4S] cluster as a cofactor.

It is found in the cell inner membrane. The catalysed reaction is a quinone + NADH + 5 H(+)(in) = a quinol + NAD(+) + 4 H(+)(out). NDH-1 shuttles electrons from NADH, via FMN and iron-sulfur (Fe-S) centers, to quinones in the respiratory chain. The immediate electron acceptor for the enzyme in this species is believed to be ubiquinone. Couples the redox reaction to proton translocation (for every two electrons transferred, four hydrogen ions are translocated across the cytoplasmic membrane), and thus conserves the redox energy in a proton gradient. This is NADH-quinone oxidoreductase subunit I 1 from Anaeromyxobacter dehalogenans (strain 2CP-C).